The following is a 428-amino-acid chain: Chaperone SurA (428 aa).

The N-terminal stretch at 1-13 is a signal peptide; the sequence is MLGALLLSGAVHA. PpiC domains are found at residues 164-265 and 276-375; these read SEEF…KLLE and RDEV…EVLG.

It localises to the periplasm. The catalysed reaction is [protein]-peptidylproline (omega=180) = [protein]-peptidylproline (omega=0). Functionally, chaperone involved in the correct folding and assembly of outer membrane proteins. Recognizes specific patterns of aromatic residues and the orientation of their side chains, which are found more frequently in integral outer membrane proteins. May act in both early periplasmic and late outer membrane-associated steps of protein maturation. This chain is Chaperone SurA, found in Pseudomonas savastanoi pv. phaseolicola (strain 1448A / Race 6) (Pseudomonas syringae pv. phaseolicola (strain 1448A / Race 6)).